Reading from the N-terminus, the 141-residue chain is Phosphoribosyl-AMP cyclohydrolase (141 aa).

Residue aspartate 88 participates in Mg(2+) binding. Zn(2+) is bound at residue cysteine 89. Mg(2+) is bound by residues aspartate 90 and aspartate 92. Positions 109 and 116 each coordinate Zn(2+).

The protein belongs to the PRA-CH family. As to quaternary structure, homodimer. Requires Mg(2+) as cofactor. The cofactor is Zn(2+).

The protein resides in the cytoplasm. It carries out the reaction 1-(5-phospho-beta-D-ribosyl)-5'-AMP + H2O = 1-(5-phospho-beta-D-ribosyl)-5-[(5-phospho-beta-D-ribosylamino)methylideneamino]imidazole-4-carboxamide. Its pathway is amino-acid biosynthesis; L-histidine biosynthesis; L-histidine from 5-phospho-alpha-D-ribose 1-diphosphate: step 3/9. Its function is as follows. Catalyzes the hydrolysis of the adenine ring of phosphoribosyl-AMP. This chain is Phosphoribosyl-AMP cyclohydrolase, found in Paracidovorax citrulli (strain AAC00-1) (Acidovorax citrulli).